The sequence spans 96 residues: (4S)-4-hydroxy-5-phosphonooxypentane-2,3-dione isomerase (96 aa).

Residues 2-91 form the ABM domain; it reads HVTLVEINVH…MTGPRKKRLF (90 aa).

This sequence belongs to the LsrG family. Homodimer.

The protein localises to the cytoplasm. The catalysed reaction is (2S)-2-hydroxy-3,4-dioxopentyl phosphate = 3-hydroxy-2,4-dioxopentyl phosphate. Involved in the degradation of phospho-AI-2, thereby terminating induction of the lsr operon and closing the AI-2 signaling cycle. Catalyzes the conversion of (4S)-4-hydroxy-5-phosphonooxypentane-2,3-dione (P-DPD) to 3-hydroxy-5-phosphonooxypentane-2,4-dione (P-HPD). The sequence is that of (4S)-4-hydroxy-5-phosphonooxypentane-2,3-dione isomerase from Escherichia coli O9:H4 (strain HS).